The chain runs to 714 residues: Cyclomaltodextrin glucanotransferase (714 aa).

Residues 1–27 form the signal peptide; it reads MKSRYKRLTSLALSLSMALGISLPAWA. The A1 stretch occupies residues 28 to 165; sequence SPDTSVDNKV…NIKVVIDFAP (138 aa). Ca(2+) is bound by residues Asp54, Asn59, Asn60, Gly78, and Asp80. Residue 127–128 participates in substrate binding; that stretch reads YW. A Ca(2+)-binding site is contributed by Asn166. Residues 166-229 form a b region; that stretch reads NHTSPADRDN…NLYDLADINH (64 aa). His167 contributes to the substrate binding site. Ile217 is a Ca(2+) binding site. Residue 220-223 participates in substrate binding; it reads NLYD. Residue Asp226 participates in Ca(2+) binding. The segment at 230–434 is A2; sequence NNNAMDAYFK…LRKSNPAIAY (205 aa). Residue Arg254 coordinates substrate. Catalysis depends on Asp256, which acts as the Nucleophile. 259–260 serves as a coordination point for substrate; the sequence is KH. Ca(2+) is bound at residue His260. The active-site Proton donor is the Glu285. 3 residues coordinate substrate: His355, Asp399, and Arg403. The c stretch occupies residues 435 to 523; it reads GTTTERWVNN…GTAVWQYTAP (89 aa). The tract at residues 524-610 is d; sequence ETSPAIGNVG…SNTFKSFNVL (87 aa). Positions 527 to 607 constitute an IPT/TIG domain; it reads PAIGNVGPTM…GTASNTFKSF (81 aa). The CBM20 domain maps to 609-714; it reads VLTGDQVTVR…VGTVTVDWQN (106 aa). The segment at 611 to 714 is e; the sequence is TGDQVTVRFL…VGTVTVDWQN (104 aa).

It belongs to the glycosyl hydrolase 13 family. As to quaternary structure, monomer. Requires Ca(2+) as cofactor.

The protein localises to the secreted. The catalysed reaction is Cyclizes part of a (1-&gt;4)-alpha-D-glucan chain by formation of a (1-&gt;4)-alpha-D-glucosidic bond.. This is Cyclomaltodextrin glucanotransferase (cgtM) from Paenibacillus macerans (Bacillus macerans).